Reading from the N-terminus, the 689-residue chain is Elongation factor G (689 aa).

In terms of domain architecture, tr-type G spans 8 to 282 (LNTRNIGIMA…AVVDYLPSPI (275 aa)). GTP contacts are provided by residues 17 to 24 (AHIDAGKT), 81 to 85 (DTPGH), and 135 to 138 (NKMD).

This sequence belongs to the TRAFAC class translation factor GTPase superfamily. Classic translation factor GTPase family. EF-G/EF-2 subfamily.

The protein resides in the cytoplasm. In terms of biological role, catalyzes the GTP-dependent ribosomal translocation step during translation elongation. During this step, the ribosome changes from the pre-translocational (PRE) to the post-translocational (POST) state as the newly formed A-site-bound peptidyl-tRNA and P-site-bound deacylated tRNA move to the P and E sites, respectively. Catalyzes the coordinated movement of the two tRNA molecules, the mRNA and conformational changes in the ribosome. The sequence is that of Elongation factor G from Mycoplasma capricolum subsp. capricolum (strain California kid / ATCC 27343 / NCTC 10154).